The sequence spans 98 residues: UPF0473 protein lp_2273 (98 aa).

It belongs to the UPF0473 family.

This Lactiplantibacillus plantarum (strain ATCC BAA-793 / NCIMB 8826 / WCFS1) (Lactobacillus plantarum) protein is UPF0473 protein lp_2273.